Reading from the N-terminus, the 166-residue chain is Orotate phosphoribosyltransferase (166 aa).

Residues Arg-83, Lys-84, His-89, and 109–117 contribute to the 5-phospho-alpha-D-ribose 1-diphosphate site; that span reads DDVATTGGS. Orotate contacts are provided by Thr-113 and Arg-141.

Belongs to the purine/pyrimidine phosphoribosyltransferase family. PyrE subfamily. Homodimer. Mg(2+) serves as cofactor.

The catalysed reaction is orotidine 5'-phosphate + diphosphate = orotate + 5-phospho-alpha-D-ribose 1-diphosphate. It functions in the pathway pyrimidine metabolism; UMP biosynthesis via de novo pathway; UMP from orotate: step 1/2. Its function is as follows. Catalyzes the transfer of a ribosyl phosphate group from 5-phosphoribose 1-diphosphate to orotate, leading to the formation of orotidine monophosphate (OMP). This chain is Orotate phosphoribosyltransferase, found in Picrophilus torridus (strain ATCC 700027 / DSM 9790 / JCM 10055 / NBRC 100828 / KAW 2/3).